We begin with the raw amino-acid sequence, 545 residues long: Phenylalanine--tRNA ligase beta subunit (545 aa).

Positions 268–343 constitute a B5 domain; that stretch reads FLHKIQNVRE…MSIGYNNLEP (76 aa). Mg(2+) contacts are provided by Asp321, Asp327, Glu330, and Asp331.

The protein belongs to the phenylalanyl-tRNA synthetase beta subunit family. Type 2 subfamily. As to quaternary structure, tetramer of two alpha and two beta subunits. The cofactor is Mg(2+).

It is found in the cytoplasm. It carries out the reaction tRNA(Phe) + L-phenylalanine + ATP = L-phenylalanyl-tRNA(Phe) + AMP + diphosphate + H(+). The protein is Phenylalanine--tRNA ligase beta subunit of Saccharolobus islandicus (strain L.S.2.15 / Lassen #1) (Sulfolobus islandicus).